Here is a 306-residue protein sequence, read N- to C-terminus: Sulfate adenylyltransferase subunit 2 (306 aa).

It belongs to the PAPS reductase family. CysD subfamily. Heterodimer composed of CysD, the smaller subunit, and CysN.

It carries out the reaction sulfate + ATP + H(+) = adenosine 5'-phosphosulfate + diphosphate. It participates in sulfur metabolism; hydrogen sulfide biosynthesis; sulfite from sulfate: step 1/3. With CysN forms the ATP sulfurylase (ATPS) that catalyzes the adenylation of sulfate producing adenosine 5'-phosphosulfate (APS) and diphosphate, the first enzymatic step in sulfur assimilation pathway. APS synthesis involves the formation of a high-energy phosphoric-sulfuric acid anhydride bond driven by GTP hydrolysis by CysN coupled to ATP hydrolysis by CysD. This Brucella anthropi (strain ATCC 49188 / DSM 6882 / CCUG 24695 / JCM 21032 / LMG 3331 / NBRC 15819 / NCTC 12168 / Alc 37) (Ochrobactrum anthropi) protein is Sulfate adenylyltransferase subunit 2.